An 818-amino-acid chain; its full sequence is Actin filament-associated protein 1-like 2 (818 aa).

At Tyr56 the chain carries Phosphotyrosine. A disordered region spans residues 66–163 (QNAESQGKAP…SKGKSAPYQW (98 aa)). The segment covering 85–94 (EPSQHSSAPQ) has biased composition (polar residues). The span at 123–139 (YYEEAEPYDTSLNEDGE) shows a compositional bias: acidic residues. 2 PH domains span residues 175–271 (DARI…EVSG) and 353–447 (SLET…SESG). Ser408 carries the phosphoserine modification. Tyr413 carries the post-translational modification Phosphotyrosine. Ser484 bears the Phosphoserine mark. The segment at 513 to 532 (AAVEPTEEATPVADDPNERE) is disordered. Residues 652–749 (AEIKLGKNRT…VKDNLKKAEA (98 aa)) are a coiled coil. The disordered stretch occupies residues 765 to 787 (NVSPRPKAVTPASAPDCTPVNSA).

In terms of assembly, interacts with SRC. Interacts with LCK when tyrosine phosphorylated. Post-translationally, tyrosine phosphorylated (by SRC). Detected in spleen and thyroid, and at lower levels in kidney, brain, lung and pancreas.

Its subcellular location is the cytoplasm. Its function is as follows. May play a role in a signaling cascade by enhancing the kinase activity of SRC. Contributes to SRC-regulated transcription activation. The protein is Actin filament-associated protein 1-like 2 (AFAP1L2) of Homo sapiens (Human).